The chain runs to 477 residues: Ubiquitin carboxyl-terminal hydrolase 7 (477 aa).

The 76-residue stretch at 2–77 (LTVSVKWQKK…LMMMGTADEI (76 aa)) folds into the Ubiquitin-like domain. One can recognise a USP domain in the interval 104–473 (AGLVNLGNTC…MAYIVMYKAR (370 aa)). The active-site Nucleophile is C113. The interval 171 to 190 (MPFWMVLQKKYPQFAQLHNG) is calmodulin-binding. Positions 364–401 (QASAKSSSKGDDVKMTDAEGSSNQSGESSTGDQQEGAS) are disordered. Residues 371–380 (SKGDDVKMTD) show a composition bias toward basic and acidic residues. Polar residues predominate over residues 382-399 (EGSSNQSGESSTGDQQEG). H425 serves as the catalytic Proton acceptor.

Belongs to the peptidase C19 family. Interacts with calmodulin (CaM).

The catalysed reaction is Thiol-dependent hydrolysis of ester, thioester, amide, peptide and isopeptide bonds formed by the C-terminal Gly of ubiquitin (a 76-residue protein attached to proteins as an intracellular targeting signal).. Recognizes and hydrolyzes the peptide bond at the C-terminal Gly of ubiquitin. Involved in the processing of poly-ubiquitin precursors as well as that of ubiquitinated proteins. In Arabidopsis thaliana (Mouse-ear cress), this protein is Ubiquitin carboxyl-terminal hydrolase 7 (UBP7).